We begin with the raw amino-acid sequence, 141 residues long: Large ribosomal subunit protein uL11 (141 aa).

This sequence belongs to the universal ribosomal protein uL11 family. Part of the ribosomal stalk of the 50S ribosomal subunit. Interacts with L10 and the large rRNA to form the base of the stalk. L10 forms an elongated spine to which L12 dimers bind in a sequential fashion forming a multimeric L10(L12)X complex. One or more lysine residues are methylated.

Functionally, forms part of the ribosomal stalk which helps the ribosome interact with GTP-bound translation factors. The chain is Large ribosomal subunit protein uL11 from Selenomonas ruminantium.